Reading from the N-terminus, the 618-residue chain is Syncytin-B (618 aa).

An N-terminal signal peptide occupies residues 1-17 (MTGFWVLCFVLFPSSLS). The Extracellular portion of the chain corresponds to 18–545 (YPESWMPLVN…SWGQWPDLGR (528 aa)). A glycan (N-linked (GlcNAc...) asparagine) is linked at N27. Residues 44-47 (CWVC) carry the CXXC motif. Disulfide bonds link C44/C47, C44/C507, and C499/C506. 3 N-linked (GlcNAc...) asparagine glycosylation sites follow: N184, N274, and N357. A fusion peptide region spans residues 422–442 (LFPFLAGLGISSALGTGIAGL). The segment at 482–498 (LQNRRALDLITAEKGGT) is immunosuppression. The CX6CC motif lies at 499-507 (CLFLQEECC). The helical transmembrane segment at 546–566 (WLPWLTPFLGPLLFLFFLLTF) threads the bilayer. Residues 567-618 (GSCLLNCLTRFVSQRLGSFVQDTAKRHVDSILQNFQYKKLPQDSPDEDTIPT) are Cytoplasmic-facing.

This sequence belongs to the gamma type-C retroviral envelope protein family. In terms of assembly, the mature protein consists of a trimer of SU-TM heterodimers. The SU-TM heterodimers are attached by a labile interchain disulfide bond. Post-translationally, synthesized as an inactive precursor that is heavily N-glycosylated and processed likely by furin in the Golgi to yield the mature SU and TM proteins. The cleavage site between SU and TM requires the minimal sequence [KR]-X-[KR]-R. The CXXC motif is highly conserved across a broad range of retroviral envelope proteins. It is thought to participate in the formation of a labile disulfide bond possibly with the CX6CC motif present in the transmembrane protein. Isomerization of the intersubunit disulfide bond to an SU intrachain disulfide bond is thought to occur upon receptor recognition in order to allow membrane fusion. Highly expressed in placenta where it localizes to syncytiotrophoblasts of the labyrinthine zona. Specifically localizes to syncytiotrophoblast layer II (SynT-II). Also detected at very low levels in ovary.

Its subcellular location is the cell membrane. In terms of biological role, this endogenous retroviral envelope protein has retained its original fusogenic properties. Together with Syna, participates in trophoblast fusion and the formation of a syncytium during placenta morphogenesis. Synb is specifically involved in formation of syncytiotrophoblast layer II (SynT-II). Promotes myoblast fusion, and may play a role in regeneration of damaged muscle tissue in males. May have immunosuppressive activity. The polypeptide is Syncytin-B (Mus musculus (Mouse)).